A 140-amino-acid chain; its full sequence is Small ribosomal subunit protein uS12 (140 aa).

Residue D102 is modified to 3-methylthioaspartic acid.

The protein belongs to the universal ribosomal protein uS12 family. In terms of assembly, part of the 30S ribosomal subunit. Contacts proteins S8 and S17. May interact with IF1 in the 30S initiation complex.

In terms of biological role, with S4 and S5 plays an important role in translational accuracy. Its function is as follows. Interacts with and stabilizes bases of the 16S rRNA that are involved in tRNA selection in the A site and with the mRNA backbone. Located at the interface of the 30S and 50S subunits, it traverses the body of the 30S subunit contacting proteins on the other side and probably holding the rRNA structure together. The combined cluster of proteins S8, S12 and S17 appears to hold together the shoulder and platform of the 30S subunit. The protein is Small ribosomal subunit protein uS12 of Geobacillus stearothermophilus (Bacillus stearothermophilus).